The sequence spans 259 residues: MHIDWWTLGLQAINVLILIWILSRFLFKPVAAIVEARRASIARLLDEAHATRVAAEAEREKARQEVTSLATARAAALQKAEDEAKAETETILANARSEAGKLREAAKADIARARQDEAAAMADHASQLAVDIAGKLLSRLPEEARISGFIEGLAQGLAALPEAIRTNIGATDAPVQLKAARALTEAETQACRVRLSEALGHPAEIAVDVRPELIAGLEIDMPHAVVRNSFRADLTRITAALIQTGSMQTGQEAPRPETP.

A helical transmembrane segment spans residues 5–27 (WWTLGLQAINVLILIWILSRFLF).

Belongs to the ATPase B chain family. In terms of assembly, F-type ATPases have 2 components, F(1) - the catalytic core - and F(0) - the membrane proton channel. F(1) has five subunits: alpha(3), beta(3), gamma(1), delta(1), epsilon(1). F(0) has three main subunits: a(1), b(2) and c(10-14). The alpha and beta chains form an alternating ring which encloses part of the gamma chain. F(1) is attached to F(0) by a central stalk formed by the gamma and epsilon chains, while a peripheral stalk is formed by the delta and b chains.

Its subcellular location is the cell inner membrane. In terms of biological role, f(1)F(0) ATP synthase produces ATP from ADP in the presence of a proton or sodium gradient. F-type ATPases consist of two structural domains, F(1) containing the extramembraneous catalytic core and F(0) containing the membrane proton channel, linked together by a central stalk and a peripheral stalk. During catalysis, ATP synthesis in the catalytic domain of F(1) is coupled via a rotary mechanism of the central stalk subunits to proton translocation. Its function is as follows. Component of the F(0) channel, it forms part of the peripheral stalk, linking F(1) to F(0). The sequence is that of ATP synthase subunit b 3 from Beijerinckia indica subsp. indica (strain ATCC 9039 / DSM 1715 / NCIMB 8712).